The chain runs to 273 residues: Energy-coupling factor transporter ATP-binding protein EcfA (273 aa).

An ABC transporter domain is found at 2-237 (ISIRDLTYFY…RASLLALGLA (236 aa)). 36-43 (GRNGSGKS) contacts ATP.

The protein belongs to the ABC transporter superfamily. Energy-coupling factor EcfA family. In terms of assembly, forms a stable energy-coupling factor (ECF) transporter complex composed of 2 membrane-embedded substrate-binding proteins (S component), 2 ATP-binding proteins (A component) and 2 transmembrane proteins (T component).

It is found in the cell membrane. Its function is as follows. ATP-binding (A) component of a common energy-coupling factor (ECF) ABC-transporter complex. Unlike classic ABC transporters this ECF transporter provides the energy necessary to transport a number of different substrates. This chain is Energy-coupling factor transporter ATP-binding protein EcfA, found in Syntrophomonas wolfei subsp. wolfei (strain DSM 2245B / Goettingen).